The chain runs to 687 residues: Tripartite terminase subunit 3 (687 aa).

The segment at 67–91 (HHPATPTSANPDVGTPRPSEDNVPA) is disordered. The short motif at 221-228 (IPRRHGKT) is the Walker A motif element. Residues 316–321 (LLYVDE) carry the Walker B motif motif. The active-site For ATPase activity is Glu-321. Active-site for nuclease activity residues include Asp-476, Glu-550, and Asp-662.

Belongs to the herpesviridae TRM3 protein family. As to quaternary structure, interacts with the terminase subunits TRM1 and TRM2. Interacts with portal protein.

The protein resides in the host nucleus. Its function is as follows. Component of the molecular motor that translocates viral genomic DNA in empty capsid during DNA packaging. Forms a tripartite terminase complex together with TRM1 and TRM2 in the host cytoplasm. Once the complex reaches the host nucleus, it interacts with the capsid portal vertex. This portal forms a ring in which genomic DNA is translocated into the capsid. TRM3 carries an RNase H-like nuclease activity that plays an important role for the cleavage of concatemeric viral DNA into unit length genomes. This is Tripartite terminase subunit 3 from Human herpesvirus 8 type P (isolate GK18) (HHV-8).